A 286-amino-acid chain; its full sequence is 33 kDa chaperonin (286 aa).

2 cysteine pairs are disulfide-bonded: Cys-225-Cys-227 and Cys-258-Cys-261.

The protein belongs to the HSP33 family. Post-translationally, under oxidizing conditions two disulfide bonds are formed involving the reactive cysteines. Under reducing conditions zinc is bound to the reactive cysteines and the protein is inactive.

It is found in the cytoplasm. Redox regulated molecular chaperone. Protects both thermally unfolding and oxidatively damaged proteins from irreversible aggregation. Plays an important role in the bacterial defense system toward oxidative stress. The sequence is that of 33 kDa chaperonin from Shewanella woodyi (strain ATCC 51908 / MS32).